The chain runs to 316 residues: Ninja-family protein 2 (316 aa).

Disordered stretches follow at residues 1 to 29 (MASR…GEPD) and 72 to 236 (TSDD…TSTG). The segment covering 99 to 108 (ERWRRREMQS) has biased composition (basic and acidic residues). Residues 156-166 (DQGNTSSSMPE) show a composition bias toward polar residues. 2 stretches are compositionally biased toward low complexity: residues 179–199 (SSME…QNKS) and 222–235 (LRTL…TTST).

It belongs to the Ninja family.

It is found in the nucleus. This chain is Ninja-family protein 2 (AFP-B1), found in Triticum aestivum (Wheat).